The chain runs to 141 residues: MVDHARAARMAKRIQQIVATAIERQIKDPRLEFVTITDARVTGDLHDATVFYTVRGKTVDAEPDTATAEAALAKATGQLRKIVGDQLSVRFTPTLSFSLDTVPEASAHFEELLARAKAQDEALRAQSAGARPAGDEDPYKP.

The interval 120–141 (DEALRAQSAGARPAGDEDPYKP) is disordered.

This sequence belongs to the RbfA family. As to quaternary structure, monomer. Binds 30S ribosomal subunits, but not 50S ribosomal subunits or 70S ribosomes.

The protein localises to the cytoplasm. Its function is as follows. One of several proteins that assist in the late maturation steps of the functional core of the 30S ribosomal subunit. Associates with free 30S ribosomal subunits (but not with 30S subunits that are part of 70S ribosomes or polysomes). Required for efficient processing of 16S rRNA. May interact with the 5'-terminal helix region of 16S rRNA. The protein is Ribosome-binding factor A of Corynebacterium jeikeium (strain K411).